Here is a 1009-residue protein sequence, read N- to C-terminus: Glutamate receptor ionotropic, delta-2 (1009 aa).

The first 23 residues, 1-23 (MKVFPAVLFLITFWSLEWEPVLP), serve as a signal peptide directing secretion. At 24 to 566 (DSIIHIGAIF…DMFACLAPFD (543 aa)) the chain is on the extracellular side. N-linked (GlcNAc...) asparagine glycans are attached at residues Asn293, Asn306, Asn390, and Asn426. Positions 531, 534, and 535 each coordinate Ca(2+). Residues 567-587 (LSLWACIAGTVLLVGTLVYLL) traverse the membrane as a helical segment. The Cytoplasmic segment spans residues 588 to 635 (NWLNPPRLPMGSVSSTTLYNSMWFVYGSFVQQGGEVPYTTLATRMMMG). A helical membrane pass occupies residues 636-656 (VWWLFALIVISSYTANLAAFL). Residues 657–830 (TISRIENSIQ…KSGSALDIHS (174 aa)) lie on the Extracellular side of the membrane. A glycan (N-linked (GlcNAc...) asparagine) is linked at Asn713. Asp753, Asp755, and Ser757 together coordinate Ca(2+). The chain crosses the membrane as a helical span at residues 831 to 851 (FAGVFFVLAAGVVLSCLIATV). Over 852–1009 (ETWWTRRKGS…GNDPDRGTSI (158 aa)) the chain is Cytoplasmic. A disordered region spans residues 989 to 1009 (YQPTPAPNFSYGNDPDRGTSI).

The protein belongs to the glutamate-gated ion channel (TC 1.A.10.1) family. GRID2 subfamily. In terms of assembly, tetramer; dimer of dimers. Expressed in cerebellar Purkinje cells, in crest cells in the medial octavolateral nucleus and in type I neurons of the optic tectum.

It localises to the postsynaptic cell membrane. The enzyme catalyses Ca(2+)(in) = Ca(2+)(out). The catalysed reaction is Na(+)(in) = Na(+)(out). In terms of biological role, member of the ionotropic glutamate receptor family, which plays a crucial role in synaptic organization and signal transduction in the central nervous system. Although it shares structural features with ionotropic glutamate receptors, does not bind glutamate as a primary ligand. Promotes synaptogenesis and mediates the D-Serine-dependent long term depression signals and AMPA receptor endocytosis of cerebellar parallel fiber-Purkinje cell (PF-PC) synapses through the NRX1B-CBLN1-GRID2 triad complex. In the presence of neurexins and cerebellins, forms cation-selective channels that are proposed to be gated by glycine and D-serine. However, recent research disputes this ligand-gated cation channel activity. Cation-selective ion channel activity can be triggered by GRM1 in Purkinje cells. This chain is Glutamate receptor ionotropic, delta-2, found in Danio rerio (Zebrafish).